The sequence spans 249 residues: DNA repair protein RecO (249 aa).

It belongs to the RecO family.

Involved in DNA repair and RecF pathway recombination. This Desulforudis audaxviator (strain MP104C) protein is DNA repair protein RecO.